The following is an 881-amino-acid chain: Cell wall protein PRY3 (881 aa).

A signal peptide spans 1–18; the sequence is MLEFPISVLLGCLVAVKA. Residues 30–144 enclose the SCP domain; the sequence is LNEHNKFRAL…TWNNYIVCSY (115 aa). N101 carries an N-linked (GlcNAc...) asparagine glycan. Positions 262-313 are disordered; it reads VVSSDATSSTTTTSSVATSSSTTSSDPTSSTAAASSSDPASSSAAASSSAST. The N-linked (GlcNAc...) asparagine glycan is linked to N360. Disordered regions lie at residues 381–400 and 453–494; these read AADD…VSEH and VSST…NSAA. Residues 386-400 are compositionally biased toward polar residues; that stretch reads QGSTSKEATSSVSEH. N488, N535, N547, and N569 each carry an N-linked (GlcNAc...) asparagine glycan. The tract at residues 579–611 is disordered; sequence IDPTLDPTDNSASPTDNAKHTSTYGSSSTGASL. Polar residues predominate over residues 585 to 594; that stretch reads PTDNSASPTD. The segment covering 599–611 has biased composition (low complexity); the sequence is TSTYGSSSTGASL. N625 is a glycosylation site (N-linked (GlcNAc...) asparagine). Disordered stretches follow at residues 758-788 and 800-830; these read LASD…TTTT and PSST…MHQP. Composition is skewed to low complexity over residues 776-788 and 808-820; these read STSN…TTTT and RTTT…STTS. Residues 821 to 830 show a composition bias toward polar residues; that stretch reads QQDGSAMHQP. A lipid anchor (GPI-anchor amidated glycine) is attached at G853. Positions 854–881 are cleaved as a propeptide — removed in mature form; it reads AATPLSIFQCNSLAGTIAAFVVAVLFAF.

This sequence belongs to the CRISP family. The GPI-anchor is attached to the protein in the endoplasmic reticulum and serves to target the protein to the cell surface. There, the glucosamine-inositol phospholipid moiety is cleaved off and the GPI-modified mannoprotein is covalently attached via its lipidless GPI glycan remnant to the 1,6-beta-glucan of the outer cell wall layer.

It localises to the secreted. Its subcellular location is the cell wall. It is found in the membrane. The full-length isoform (isoform Long) is a daughter cell-specific cell wall protein required for efficient export of lipids such as acetylated sterols. Acts in detoxification of hydrophobic compounds. Involved in tolerance to organic solvents such as dimethyl sulfoxide (DMSO). Also plays a role as an inhibitor of mating. STE12 is utilized as a repressor of full-length PRY3 transcription, ensuring efficient mating. Functionally, there is no evidence that production of the short PRY3 transcript (isoform Short) is anything more than an adventitious by-product of the mechanism responsible for the repression of the full-length transcript. Moreover, no disadvantage is detectable for cells unable to make the short transcript. In Saccharomyces cerevisiae (strain ATCC 204508 / S288c) (Baker's yeast), this protein is Cell wall protein PRY3 (PRY3).